The sequence spans 178 residues: MAAKLILFVCAIALVAQSVLGTGCGCCCRGCGCGCGGCGSRCCDRFCLCSNSAAPTGLSICSENRYNGDVCVCGEVPFLGTADVCGDMCSSGCGCIDYGCGDGCVGITQSCGGCGCGCGGCGGCGCGGCGGCGCGGCGGCGCCGGCGGCGCGCGGCGGCGCCGGCGGCGCGCGGCGCC.

The N-terminal stretch at 1–21 is a signal peptide; that stretch reads MAAKLILFVCAIALVAQSVLG. Positions 22 to 46 are left arm; the sequence is TGCGCCCRGCGCGCGGCGSRCCDRF. The tract at residues 47–110 is central domain; sequence CLCSNSAAPT…GDGCVGITQS (64 aa). Residues 111–178 form a right arm (Gly-rich tandem repeats) region; that stretch reads CGGCGCGCGG…GCGCGGCGCC (68 aa).

This sequence belongs to the chorion protein family.

This protein is one of many from the eggshell of the silk moth. This Bombyx mori (Silk moth) protein is Chorion class high-cysteine HCB protein 13.